The primary structure comprises 392 residues: Homoserine O-acetyltransferase (392 aa).

Residues 52–356 (NVVVVLHALT…ICGHDGFLVE (305 aa)) form the AB hydrolase-1 domain. The active-site Nucleophile is the Ser157. Arg227 serves as a coordination point for substrate. Catalysis depends on residues Asp320 and His350. A substrate-binding site is contributed by Asp351. Positions 373-392 (SQSAGPGGAGPGSRKGTTRR) are disordered.

Belongs to the AB hydrolase superfamily. MetX family. As to quaternary structure, homodimer.

It is found in the cytoplasm. The catalysed reaction is L-homoserine + acetyl-CoA = O-acetyl-L-homoserine + CoA. The protein operates within amino-acid biosynthesis; L-methionine biosynthesis via de novo pathway; O-acetyl-L-homoserine from L-homoserine: step 1/1. Functionally, transfers an acetyl group from acetyl-CoA to L-homoserine, forming acetyl-L-homoserine. In Mycolicibacterium paratuberculosis (strain ATCC BAA-968 / K-10) (Mycobacterium paratuberculosis), this protein is Homoserine O-acetyltransferase.